Consider the following 151-residue polypeptide: MAEVPADSRGATYLGFDFGERNIGVAVGQSVTGTAAPLRTLRAQPSARLWAAISELIDQWLPAGLVVGLSHQQDGSENPITAPTLRFCRQLEGRYRLPVYTVDETLTTAESRTHFYQRRRRKSVEFEQVKDEMAAQLILQTWFSIDKASPR.

Belongs to the YqgF nuclease family.

It is found in the cytoplasm. Functionally, could be a nuclease involved in processing of the 5'-end of pre-16S rRNA. The protein is Putative pre-16S rRNA nuclease of Methylococcus capsulatus (strain ATCC 33009 / NCIMB 11132 / Bath).